The sequence spans 394 residues: Elongation factor Tu (394 aa).

One can recognise a tr-type G domain in the interval 10-204; sequence KPHVNVGTIG…HLDTYIPEPE (195 aa). The interval 19–26 is G1; it reads GHVDHGKT. 19–26 is a binding site for GTP; it reads GHVDHGKT. A Mg(2+)-binding site is contributed by threonine 26. The interval 60–64 is G2; it reads GITIN. Positions 81 to 84 are G3; it reads DCPG. GTP-binding positions include 81 to 85 and 136 to 139; these read DCPGH and NKCD. Residues 136 to 139 are G4; sequence NKCD. The G5 stretch occupies residues 174 to 176; the sequence is SAL.

It belongs to the TRAFAC class translation factor GTPase superfamily. Classic translation factor GTPase family. EF-Tu/EF-1A subfamily. As to quaternary structure, monomer.

The protein localises to the cytoplasm. It carries out the reaction GTP + H2O = GDP + phosphate + H(+). In terms of biological role, GTP hydrolase that promotes the GTP-dependent binding of aminoacyl-tRNA to the A-site of ribosomes during protein biosynthesis. This Aeromonas hydrophila subsp. hydrophila (strain ATCC 7966 / DSM 30187 / BCRC 13018 / CCUG 14551 / JCM 1027 / KCTC 2358 / NCIMB 9240 / NCTC 8049) protein is Elongation factor Tu.